A 1894-amino-acid polypeptide reads, in one-letter code: Adenylate kinase 9 (1894 aa).

The adenylate kinase 1 stretch occupies residues 32 to 286 (TCFIIFGKPG…LFMTVIERLK (255 aa)). 41–46 (GAGKTT) contributes to the ATP binding site. The interval 61–90 (EALSVLEEHIAAEKETGAMLQSLLVSGHSI) is NMP 1. AMP is bound at residue 117-120 (EMPS). The tract at residues 161–206 (GQRQHSTTGYVYTREQWDPEIIESRRRKKRDFPKEGKSEEEEEEEE) is LID 1. The tract at residues 188-211 (KKRDFPKEGKSEEEEEEEEQEEEE) is disordered. A compositionally biased stretch (acidic residues) spans 198–211 (SEEEEEEEEQEEEE). R230 contacts AMP. The stretch at 451–478 (IKVVQQRLLNEKQAKQQEERTLKELQVQ) forms a coiled coil. Residues 492 to 533 (SEELPSLENTGSKLSSLEIGQEDKSKSETTITGDQVKDVSTE) are disordered. Residues 651–691 (LERLQEEAQAKKREEEEIRKVKEEELRLEEEKQRLMELATK) are a coiled coil. Disordered stretches follow at residues 710–789 (PYPD…LGSE) and 876–911 (EEEA…EKRR). A compositionally biased stretch (acidic residues) spans 715-736 (PDNEAEEEVEDSEIHEESEAQE). Basic and acidic residues-rich tracts occupy residues 757-768 (EGDHEPEAEFKP) and 777-789 (ETEK…LGSE). Residues 876 to 903 (EEEAEDYQAETEIDEEQEEEEEEEEEGE) show a composition bias toward acidic residues. Residues 976–1187 (LRICLLGPHG…VAKRRAELIL (212 aa)) are adenylate kinase 2. ATP is bound at residue 985-990 (GSGKTV). The NMP 2 stretch occupies residues 1005–1036 (QFDEFLQEKMLLKAERKFGPEFEDDSEEEQLV). Residues 1034 to 1036 (QLV) and 1063 to 1066 (VQLT) each bind AMP. Residues 1108 to 1128 (DGFPRHPEEAQFLGERGFFPD) are LID 2. The segment covering 1223 to 1241 (EFPKDEEEMSEEDEEQEAD) has biased composition (acidic residues). The segment at 1223–1243 (EFPKDEEEMSEEDEEQEADAT) is disordered. The tract at residues 1395-1584 (VRIMIVGPPK…VWNEVLKDIQ (190 aa)) is adenylate kinase 3. Residue 1404–1409 (KSGKTT) participates in ATP binding. An NMP 3 region spans residues 1424–1455 (SVGDALRGMLNNHPDSELSLMLNWHLHKGKTV). AMP is bound by residues R1430, 1482-1485 (GYPV), and Q1489. The interval 1519–1533 (LEKKTEQSMSYPLHN) is LID 3.

This sequence belongs to the adenylate kinase family. As to expression, highly expressed in the testis.

Its subcellular location is the cytoplasm. The protein resides in the nucleus. It is found in the cell projection. The protein localises to the cilium. It localises to the flagellum. The catalysed reaction is a ribonucleoside 5'-phosphate + ATP = a ribonucleoside 5'-diphosphate + ADP. It carries out the reaction AMP + ATP = 2 ADP. It catalyses the reaction GTP + AMP = GDP + ADP. The enzyme catalyses CMP + ATP = CDP + ADP. The catalysed reaction is GTP + CMP = CDP + GDP. It carries out the reaction dAMP + ATP = dADP + ADP. It catalyses the reaction dCMP + ATP = dCDP + ADP. The enzyme catalyses a ribonucleoside 5'-diphosphate + ATP = a ribonucleoside 5'-triphosphate + ADP. The catalysed reaction is CDP + ATP = CTP + ADP. It carries out the reaction CDP + GTP = CTP + GDP. It catalyses the reaction GDP + ATP = GTP + ADP. The enzyme catalyses UDP + ATP = UTP + ADP. The catalysed reaction is GTP + UDP = UTP + GDP. It carries out the reaction dTDP + GTP = dTTP + GDP. It catalyses the reaction dCDP + ATP = dCTP + ADP. The enzyme catalyses dCDP + GTP = dCTP + GDP. The catalysed reaction is dGDP + ATP = dGTP + ADP. It carries out the reaction dTDP + ATP = dTTP + ADP. It catalyses the reaction dADP + GTP = dATP + GDP. Broad-specificity nucleoside phosphate kinase involved in cellular nucleotide homeostasis by catalyzing nucleoside-phosphate interconversions. Similar to other adenylate kinases, preferentially catalyzes the phosphorylation of the nucleoside monophosphate AMP with ATP as phosphate donor to produce ADP. In vitro, can also catalyze the phosphorylation of CMP, dAMP and dCMP and use GTP as an alternate phosphate donor. Moreover, exhibits a diphosphate kinase activity, producing ATP, CTP, GTP, UTP, TTP, dATP, dCTP and dGTP from the corresponding diphosphate substrates with either ATP or GTP as phosphate donors. For this activity shows the following substrate preference CDP &gt; UDP &gt; ADP &gt; TDP. This chain is Adenylate kinase 9, found in Mus musculus (Mouse).